The primary structure comprises 147 residues: Hemoglobin subunit epsilon (147 aa).

A Globin domain is found at 3-147; that stretch reads HFTAEEKAAI…VAIALGHKYH (145 aa). Residues S14 and S51 each carry the phosphoserine modification. Heme b is bound by residues H64 and H93.

It belongs to the globin family. Heterotetramer of two alpha chains and two epsilon chains in early embryonic hemoglobin Gower-2; two zeta chains and two epsilon chains in early embryonic hemoglobin Gower-1. In terms of tissue distribution, red blood cells.

The epsilon chain is a beta-type chain of early mammalian embryonic hemoglobin. The polypeptide is Hemoglobin subunit epsilon (HBE1) (Saimiri boliviensis boliviensis (Bolivian squirrel monkey)).